Consider the following 215-residue polypeptide: Probable transaldolase (215 aa).

The active-site Schiff-base intermediate with substrate is the lysine 83.

This sequence belongs to the transaldolase family. Type 3B subfamily.

The protein localises to the cytoplasm. It carries out the reaction D-sedoheptulose 7-phosphate + D-glyceraldehyde 3-phosphate = D-erythrose 4-phosphate + beta-D-fructose 6-phosphate. Its pathway is carbohydrate degradation; pentose phosphate pathway; D-glyceraldehyde 3-phosphate and beta-D-fructose 6-phosphate from D-ribose 5-phosphate and D-xylulose 5-phosphate (non-oxidative stage): step 2/3. Transaldolase is important for the balance of metabolites in the pentose-phosphate pathway. The sequence is that of Probable transaldolase from Desulforudis audaxviator (strain MP104C).